Reading from the N-terminus, the 914-residue chain is DENN domain-containing protein 2C (914 aa).

The tract at residues 46-98 is disordered; that stretch reads FGVRYNCHQESPPHKRPTGEERNGALPRNTDVKSRDQSEDEGEGGECRGSHPS. Residues 56–68 show a composition bias toward basic and acidic residues; it reads SPPHKRPTGEERN. Ser-261 carries the post-translational modification Phosphoserine. A disordered region spans residues 411-446; sequence GKKRVKLQPYTGKEAPSSKGETSGNESDAEYLPKNR. The uDENN domain occupies 480 to 627; that stretch reads ELFVVVSLQK…PFPAPGRTIT (148 aa). The cDENN domain occupies 649–782; it reads RLEHVDFECL…LQAALVQILE (134 aa). The dDENN domain occupies 784 to 874; the sequence is RDEVLAQEQQ…QDRELRQSGV (91 aa).

Its function is as follows. Guanine nucleotide exchange factor (GEF) which may activate RAB9A and RAB9B. Promotes the exchange of GDP to GTP, converting inactive GDP-bound Rab proteins into their active GTP-bound form. This is DENN domain-containing protein 2C (Dennd2c) from Mus musculus (Mouse).